We begin with the raw amino-acid sequence, 403 residues long: Phosphoglycerate kinase (403 aa).

Substrate-binding positions include 24–26 (DLN), arginine 39, 62–65 (HLGR), arginine 121, and arginine 161. Residues lysine 211, glycine 299, glutamate 330, and 359 to 362 (GGDS) contribute to the ATP site.

Belongs to the phosphoglycerate kinase family. Monomer.

It is found in the cytoplasm. The catalysed reaction is (2R)-3-phosphoglycerate + ATP = (2R)-3-phospho-glyceroyl phosphate + ADP. The protein operates within carbohydrate degradation; glycolysis; pyruvate from D-glyceraldehyde 3-phosphate: step 2/5. This Corynebacterium kroppenstedtii (strain DSM 44385 / JCM 11950 / CIP 105744 / CCUG 35717) protein is Phosphoglycerate kinase.